A 177-amino-acid polypeptide reads, in one-letter code: Adenylyl-sulfate kinase (177 aa).

12–19 (GLSGAGKT) provides a ligand contact to ATP. Ser-86 acts as the Phosphoserine intermediate in catalysis.

The protein belongs to the APS kinase family.

It carries out the reaction adenosine 5'-phosphosulfate + ATP = 3'-phosphoadenylyl sulfate + ADP + H(+). It participates in sulfur metabolism; hydrogen sulfide biosynthesis; sulfite from sulfate: step 2/3. Functionally, catalyzes the synthesis of activated sulfate. The sequence is that of Adenylyl-sulfate kinase from Picosynechococcus sp. (strain ATCC 27264 / PCC 7002 / PR-6) (Agmenellum quadruplicatum).